Reading from the N-terminus, the 817-residue chain is Tax1-binding protein 1 homolog (817 aa).

Ser124 and Ser138 each carry phosphoserine. Residues 144–628 are a coiled coil; sequence TTKAGLLELK…ENQAERKLEG (485 aa). An oligomerization region spans residues 320 to 420; the sequence is EEISRLQFSL…ELKLSAVNKD (101 aa). Positions 609–627 are enriched in basic and acidic residues; the sequence is SREKEHKRSVENQAERKLE. The interval 609–685 is disordered; it reads SREKEHKRSV…ADGAFYPDEI (77 aa). The residue at position 617 (Ser617) is a Phosphoserine; by IKKA. The span at 628 to 643 shows a compositional bias: polar residues; sequence GQNSQSPHQISQCLKT. Phosphoserine is present on Ser633. Residue Ser694 is modified to Phosphoserine; by IKKA. Residues 704 to 742 are disordered; that stretch reads SQPARNLSRPDGLEDPEDSKEDEKVPTAPDPPSQHLRGH. UBZ1-type zinc fingers lie at residues 755–781 and 782–808; these read QKKC…VESH and WKVC…VQTH. Residues Cys758, Cys761, His777, His781, Cys785, Cys788, His804, and His808 each contribute to the Zn(2+) site.

Homooligomer. Interacts with TNFAIP3. Interacts with STARD13. Interacts with MYO6. Interacts with TOM1; the interaction is indirect and is mediated by MYO6, which acts as a bridge between TOM1 and TAX1BP1. Interacts with MAVS; this interaction induces MAVS polyubiquitination. Interacts with TNIP1. Interacts with TRAF6; this interaction mediates deubiquitination of TRAF6 and inhibition of NF-kappa-B activation. Interacts with RIPK1; this interaction negatively regulates RIPK1 ubiquitination. Interacts with NBR1. Interacts with TBK1. Interacts with RB1CC1. Interacts with SQSTM1. Interacts with AZI2. Phosphorylated in the C-terminal region by CHUK/IKKA leading to NF-kappa-B signaling down-regulation.

Its subcellular location is the cytoplasm. The protein localises to the mitochondrion. It localises to the preautophagosomal structure. It is found in the cytoplasmic vesicle. The protein resides in the autophagosome. Ubiquitin-binding adapter that participates in inflammatory, antiviral and innate immune processes as well as selective autophagy regulation. Plays a key role in the negative regulation of NF-kappa-B and IRF3 signalings by acting as an adapter for the ubiquitin-editing enzyme A20/TNFAIP3 to bind and inactivate its substrates. Disrupts the interactions between the E3 ubiquitin ligase TRAF3 and TBK1/IKBKE to attenuate 'Lys63'-linked polyubiquitination of TBK1 and thereby IFN-beta production. Also recruits A20/TNFAIP3 to ubiquitinated signaling proteins TRAF6 and RIPK1, leading to their deubiquitination and disruption of IL-1 and TNF-induced NF-kappa-B signaling pathways. Inhibits virus-induced apoptosis by inducing the 'Lys-48'-linked polyubiquitination and degradation of MAVS via recruitment of the E3 ligase ITCH, thereby attenuating MAVS-mediated apoptosis signaling. As a macroautophagy/autophagy receptor, facilitates the xenophagic clearance of pathogenic bacteria such as Salmonella typhimurium and Mycobacterium tuberculosis. Upon NBR1 recruitment to the SQSTM1-ubiquitin condensates, acts as the major recruiter of RB1CC1 to these ubiquitin condensates to promote their autophagic degradation. The chain is Tax1-binding protein 1 homolog (TAX1BP1) from Bos taurus (Bovine).